The sequence spans 464 residues: ATP synthase subunit beta (464 aa).

An ATP-binding site is contributed by 153–160 (GGAGVGKT).

The protein belongs to the ATPase alpha/beta chains family. F-type ATPases have 2 components, CF(1) - the catalytic core - and CF(0) - the membrane proton channel. CF(1) has five subunits: alpha(3), beta(3), gamma(1), delta(1), epsilon(1). CF(0) has three main subunits: a(1), b(2) and c(9-12). The alpha and beta chains form an alternating ring which encloses part of the gamma chain. CF(1) is attached to CF(0) by a central stalk formed by the gamma and epsilon chains, while a peripheral stalk is formed by the delta and b chains.

Its subcellular location is the cell inner membrane. The catalysed reaction is ATP + H2O + 4 H(+)(in) = ADP + phosphate + 5 H(+)(out). Functionally, produces ATP from ADP in the presence of a proton gradient across the membrane. The catalytic sites are hosted primarily by the beta subunits. The protein is ATP synthase subunit beta of Burkholderia cenocepacia (strain ATCC BAA-245 / DSM 16553 / LMG 16656 / NCTC 13227 / J2315 / CF5610) (Burkholderia cepacia (strain J2315)).